The chain runs to 750 residues: Pesticidal crystal protein Cry11Bb (750 aa).

Residues 672–750 (QGYNDNYNQN…NYNQNTSSGV (79 aa)) form a disordered region.

It belongs to the delta endotoxin family.

Its function is as follows. Promotes colloidosmotic lysis by binding to the midgut epithelial cells of mosquito larvae such as Aedes aegypti, Anopheles albimanus and Culex quinquefasciatus. This is Pesticidal crystal protein Cry11Bb (cry11Bb) from Bacillus thuringiensis subsp. medellin.